The primary structure comprises 108 residues: Holo-[acyl-carrier-protein] synthase (108 aa).

Aspartate 9 and glutamate 52 together coordinate Mg(2+).

The protein belongs to the P-Pant transferase superfamily. AcpS family. Mg(2+) is required as a cofactor.

It is found in the cytoplasm. The catalysed reaction is apo-[ACP] + CoA = holo-[ACP] + adenosine 3',5'-bisphosphate + H(+). Its function is as follows. Transfers the 4'-phosphopantetheine moiety from coenzyme A to a Ser of acyl-carrier-protein. The polypeptide is Holo-[acyl-carrier-protein] synthase (Coprothermobacter proteolyticus (strain ATCC 35245 / DSM 5265 / OCM 4 / BT)).